The sequence spans 334 residues: DNA-directed RNA polymerase subunit alpha (334 aa).

The segment at 1 to 231 is alpha N-terminal domain (alpha-NTD); sequence MQSNTFLTPR…EQLSVFADLK (231 aa). Residues 245–334 are alpha C-terminal domain (alpha-CTD); sequence IDPVLLRPVD…GKKDTSHAAP (90 aa).

The protein belongs to the RNA polymerase alpha chain family. As to quaternary structure, homodimer. The RNAP catalytic core consists of 2 alpha, 1 beta, 1 beta' and 1 omega subunit. When a sigma factor is associated with the core the holoenzyme is formed, which can initiate transcription.

It catalyses the reaction RNA(n) + a ribonucleoside 5'-triphosphate = RNA(n+1) + diphosphate. Its function is as follows. DNA-dependent RNA polymerase catalyzes the transcription of DNA into RNA using the four ribonucleoside triphosphates as substrates. The sequence is that of DNA-directed RNA polymerase subunit alpha from Nitrosospira multiformis (strain ATCC 25196 / NCIMB 11849 / C 71).